A 252-amino-acid polypeptide reads, in one-letter code: Type II secretion system protein N (252 aa).

Over 1 to 4 (MKQK) the chain is Cytoplasmic. The helical transmembrane segment at 5–25 (VLIAALFLVAYLGFLLVKLPA) threads the bilayer. Residues 26–252 (TLVVRHLPLP…RFPLRYQGRI (227 aa)) lie on the Periplasmic side of the membrane.

This sequence belongs to the GSP N family.

It is found in the cell inner membrane. In terms of biological role, involved in a type II secretion system (T2SS, formerly general secretion pathway, GSP) for the export of proteins. The protein is Type II secretion system protein N (exeN) of Aeromonas hydrophila.